Reading from the N-terminus, the 284-residue chain is Bifunctional protein FolD (284 aa).

Residues 165 to 167 (GRS) and serine 190 each bind NADP(+).

The protein belongs to the tetrahydrofolate dehydrogenase/cyclohydrolase family. Homodimer.

The enzyme catalyses (6R)-5,10-methylene-5,6,7,8-tetrahydrofolate + NADP(+) = (6R)-5,10-methenyltetrahydrofolate + NADPH. It carries out the reaction (6R)-5,10-methenyltetrahydrofolate + H2O = (6R)-10-formyltetrahydrofolate + H(+). It participates in one-carbon metabolism; tetrahydrofolate interconversion. In terms of biological role, catalyzes the oxidation of 5,10-methylenetetrahydrofolate to 5,10-methenyltetrahydrofolate and then the hydrolysis of 5,10-methenyltetrahydrofolate to 10-formyltetrahydrofolate. The protein is Bifunctional protein FolD of Streptococcus agalactiae serotype Ia (strain ATCC 27591 / A909 / CDC SS700).